We begin with the raw amino-acid sequence, 172 residues long: Co-chaperone protein HscB homolog (172 aa).

The region spanning N2–L69 is the J domain.

Belongs to the HscB family. In terms of assembly, interacts with HscA and stimulates its ATPase activity.

In terms of biological role, co-chaperone involved in the maturation of iron-sulfur cluster-containing proteins. Seems to help targeting proteins to be folded toward HscA. This Acinetobacter baumannii (strain AB307-0294) protein is Co-chaperone protein HscB homolog.